Reading from the N-terminus, the 242-residue chain is Probable transcriptional regulatory protein LSL_0422 (242 aa).

The segment at 1 to 21 (MSGHSKWHNIQGRKNAQDAKR) is disordered.

This sequence belongs to the TACO1 family.

It is found in the cytoplasm. The polypeptide is Probable transcriptional regulatory protein LSL_0422 (Ligilactobacillus salivarius (strain UCC118) (Lactobacillus salivarius)).